Here is a 354-residue protein sequence, read N- to C-terminus: Dihydroorotate dehydrogenase (quinone) (354 aa).

FMN-binding positions include 70 to 74 (AGFDK) and threonine 94. Residue lysine 74 participates in substrate binding. 119-123 (NAMGF) provides a ligand contact to substrate. FMN is bound by residues asparagine 148 and asparagine 181. Substrate is bound at residue asparagine 181. The Nucleophile role is filled by serine 184. Residue asparagine 186 coordinates substrate. FMN-binding residues include lysine 217 and threonine 245. A substrate-binding site is contributed by 246-247 (NT). FMN is bound by residues glycine 265, glycine 294, and 315-316 (YS).

It belongs to the dihydroorotate dehydrogenase family. Type 2 subfamily. As to quaternary structure, monomer. It depends on FMN as a cofactor.

The protein localises to the cell membrane. It catalyses the reaction (S)-dihydroorotate + a quinone = orotate + a quinol. The protein operates within pyrimidine metabolism; UMP biosynthesis via de novo pathway; orotate from (S)-dihydroorotate (quinone route): step 1/1. Functionally, catalyzes the conversion of dihydroorotate to orotate with quinone as electron acceptor. The polypeptide is Dihydroorotate dehydrogenase (quinone) (Sulfurovum sp. (strain NBC37-1)).